Here is an 83-residue protein sequence, read N- to C-terminus: Conotoxin VnMKLT1-022 (83 aa).

The signal sequence occupies residues 1-22; sequence MKLMCMMIVAVLFLTAWTFVTA. Residues 23-55 constitute a propeptide that is removed on maturation; sequence DDSINGPENRRIWEKLLSKTRDEMKNPEASKLN. 3 disulfide bridges follow: C59–C74, C66–C78, and C73–C82.

The protein belongs to the conotoxin O1 superfamily. In terms of tissue distribution, expressed by the venom duct.

Its subcellular location is the secreted. The protein is Conotoxin VnMKLT1-022 of Conus ventricosus (Mediterranean cone).